The primary structure comprises 74 residues: Cytochrome c oxidase assembly factor 5 (74 aa).

Residues 27–65 (QSACVLQEGKSPRQCLKEGNCRALQYSFFECKRSMLDAR) form the CHCH domain. Residues 30–41 (CVLQEGKSPRQC) carry the Cx10C motif motif. 2 disulfides stabilise this stretch: C30/C57 and C41/C47. A Phosphoserine modification is found at S37. The Cx9C motif motif lies at 47 to 57 (CRALQYSFFEC).

It belongs to the PET191 family.

In terms of biological role, involved in an early step of the mitochondrial complex IV assembly process. The polypeptide is Cytochrome c oxidase assembly factor 5 (Coa5) (Mus musculus (Mouse)).